A 515-amino-acid chain; its full sequence is GMP synthase [glutamine-hydrolyzing] (515 aa).

The region spanning 10 to 200 (TIIVLDFGSQ…VFGVCGCSEG (191 aa)) is the Glutamine amidotransferase type-1 domain. The active-site Nucleophile is the C87. Active-site residues include H174 and E176. In terms of domain architecture, GMPS ATP-PPase spans 201-390 (WNMENFIEVE…LGIPDEIVWR (190 aa)). Residue 228-234 (SGGVDSS) coordinates ATP.

Homodimer.

The catalysed reaction is XMP + L-glutamine + ATP + H2O = GMP + L-glutamate + AMP + diphosphate + 2 H(+). Its pathway is purine metabolism; GMP biosynthesis; GMP from XMP (L-Gln route): step 1/1. Catalyzes the synthesis of GMP from XMP. This chain is GMP synthase [glutamine-hydrolyzing], found in Bacillus anthracis (strain A0248).